Reading from the N-terminus, the 690-residue chain is Protein arginine N-methyltransferase 7 (690 aa).

SAM-dependent MTase PRMT-type domains lie at 14–357 and 366–690; these read QNSW…YSLW and TKSV…QKKL.

This sequence belongs to the class I-like SAM-binding methyltransferase superfamily. Protein arginine N-methyltransferase family. PRMT7 subfamily.

Essential arginine methyltransferase that can both catalyze the formation of omega-N monomethylarginine (MMA) and symmetrical dimethylarginine (sDMA). Specifically mediates the symmetrical dimethylation of arginine residues in the small nuclear ribonucleoproteins SmD1 and SmD3. The chain is Protein arginine N-methyltransferase 7 (Art7) from Drosophila yakuba (Fruit fly).